Reading from the N-terminus, the 705-residue chain is Translation initiation factor IF-2 (705 aa).

Residues 40 to 124 (DDQIKALDKK…QPAAPKEIPS (85 aa)) form a disordered region. Positions 41–58 (DQIKALDKKFKKEQKNDN) are enriched in basic and acidic residues. Positions 59–77 (KQSTQNNHQKSNNQNQNKG) are enriched in low complexity. The span at 94–108 (KGNKKNNRNNKKNNK) shows a compositional bias: basic residues. The 170-residue stretch at 207 to 376 (ERPAVVTIMG…GLVAEVQELK (170 aa)) folds into the tr-type G domain. The G1 stretch occupies residues 216-223 (GHVDHGKT). Residue 216–223 (GHVDHGKT) participates in GTP binding. The G2 stretch occupies residues 241-245 (GITQH). The tract at residues 262-265 (DTPG) is G3. Residues 262–266 (DTPGH) and 316–319 (NKID) each bind GTP. Positions 316–319 (NKID) are G4. The tract at residues 352 to 354 (SAL) is G5.

It belongs to the TRAFAC class translation factor GTPase superfamily. Classic translation factor GTPase family. IF-2 subfamily.

The protein localises to the cytoplasm. Functionally, one of the essential components for the initiation of protein synthesis. Protects formylmethionyl-tRNA from spontaneous hydrolysis and promotes its binding to the 30S ribosomal subunits. Also involved in the hydrolysis of GTP during the formation of the 70S ribosomal complex. This Staphylococcus aureus (strain USA300) protein is Translation initiation factor IF-2.